Here is a 359-residue protein sequence, read N- to C-terminus: Mandelate racemase (359 aa).

Lysine 166 serves as the catalytic Proton acceptor; specific for S-mandelate. Residues aspartate 195, glutamate 221, and glutamate 247 each contribute to the Mg(2+) site. Histidine 297 functions as the Proton acceptor; specific for R-mandelate in the catalytic mechanism. Glutamate 317 is a binding site for substrate.

It belongs to the mandelate racemase/muconate lactonizing enzyme family. In terms of assembly, homooctamer. The cofactor is Mg(2+).

The catalysed reaction is (S)-mandelate = (R)-mandelate. It functions in the pathway aromatic compound metabolism; (R)-mandelate degradation; benzoate from (R)-mandelate: step 1/4. This Pseudomonas putida (Arthrobacter siderocapsulatus) protein is Mandelate racemase (mdlA).